Reading from the N-terminus, the 373-residue chain is Dual-specificity RNA methyltransferase RlmN (373 aa).

Glutamate 104 serves as the catalytic Proton acceptor. A Radical SAM core domain is found at 110 to 349 (KNQRTTLCIS…VTIRKIRGYD (240 aa)). Cysteine 117 and cysteine 354 form a disulfide bridge. Residues cysteine 124, cysteine 128, and cysteine 131 each coordinate [4Fe-4S] cluster. Residues 178 to 179 (GE), serine 210, 232 to 234 (SLH), and asparagine 311 contribute to the S-adenosyl-L-methionine site. Catalysis depends on cysteine 354, which acts as the S-methylcysteine intermediate.

The protein belongs to the radical SAM superfamily. RlmN family. [4Fe-4S] cluster is required as a cofactor.

The protein localises to the cytoplasm. It carries out the reaction adenosine(2503) in 23S rRNA + 2 reduced [2Fe-2S]-[ferredoxin] + 2 S-adenosyl-L-methionine = 2-methyladenosine(2503) in 23S rRNA + 5'-deoxyadenosine + L-methionine + 2 oxidized [2Fe-2S]-[ferredoxin] + S-adenosyl-L-homocysteine. The enzyme catalyses adenosine(37) in tRNA + 2 reduced [2Fe-2S]-[ferredoxin] + 2 S-adenosyl-L-methionine = 2-methyladenosine(37) in tRNA + 5'-deoxyadenosine + L-methionine + 2 oxidized [2Fe-2S]-[ferredoxin] + S-adenosyl-L-homocysteine. Functionally, specifically methylates position 2 of adenine 2503 in 23S rRNA and position 2 of adenine 37 in tRNAs. m2A2503 modification seems to play a crucial role in the proofreading step occurring at the peptidyl transferase center and thus would serve to optimize ribosomal fidelity. This chain is Dual-specificity RNA methyltransferase RlmN, found in Buchnera aphidicola subsp. Baizongia pistaciae (strain Bp).